The primary structure comprises 582 residues: Sodium-dependent low-affinity dicarboxylate transporter 1 (582 aa).

The next 12 helical transmembrane spans lie at 17–37, 59–79, 87–107, 130–150, 224–244, 271–291, 317–337, 353–373, 401–421, 455–475, 482–502, and 527–547; these read SFVI…VGDS, ALPL…FGIM, AYLP…LAVE, VMAG…NTAT, LMLS…TGTA, IFAF…LYLL, FSFA…LWIL, EFVS…TLPE, FPWS…GVKE, TNVC…AELA, PLNF…LPVA, and VTLG…GFVF.

Belongs to the SLC13A/DASS transporter (TC 2.A.47) family. NADC subfamily. Nad-1 and nad-2 are coexpressed in the intestinal tract from early larvae to adults, expression is from the pharynx through to the anus. Expression level is significantly greater in the anterior half of the intestine than in the posterior half.

The protein localises to the membrane. In terms of biological role, low affinity sodium-dicarboxylate cotransporter that accepts a range of tricarboxylic acid-cycle intermediates with 4-5 carbon atoms. There is no interaction with monocarboxylates. This chain is Sodium-dependent low-affinity dicarboxylate transporter 1 (nac-1), found in Caenorhabditis elegans.